The sequence spans 188 residues: Elongation factor P (188 aa).

It belongs to the elongation factor P family.

The protein resides in the cytoplasm. It functions in the pathway protein biosynthesis; polypeptide chain elongation. Involved in peptide bond synthesis. Stimulates efficient translation and peptide-bond synthesis on native or reconstituted 70S ribosomes in vitro. Probably functions indirectly by altering the affinity of the ribosome for aminoacyl-tRNA, thus increasing their reactivity as acceptors for peptidyl transferase. The protein is Elongation factor P of Azotobacter vinelandii (strain DJ / ATCC BAA-1303).